The sequence spans 139 residues: Protein archease (139 aa).

Residues D12, D138, and I139 each coordinate Ca(2+).

It belongs to the archease family.

In terms of biological role, activates the tRNA-splicing ligase complex by facilitating the enzymatic turnover of catalytic subunit RtcB. Acts by promoting the guanylylation of RtcB, a key intermediate step in tRNA ligation. Can also alter the NTP specificity of RtcB such that ATP, dGTP or ITP is used efficiently. The protein is Protein archease of Saccharolobus islandicus (strain Y.G.57.14 / Yellowstone #1) (Sulfolobus islandicus).